A 689-amino-acid polypeptide reads, in one-letter code: Homoaconitase, mitochondrial (689 aa).

The transit peptide at 1–17 directs the protein to the mitochondrion; sequence MVVLRRSFHVYTRLQRG. Cys-336, Cys-403, and Cys-406 together coordinate [4Fe-4S] cluster.

Belongs to the aconitase/IPM isomerase family. The cofactor is [4Fe-4S] cluster.

It is found in the mitochondrion. The catalysed reaction is (2R,3S)-homoisocitrate = cis-homoaconitate + H2O. It participates in amino-acid biosynthesis; L-lysine biosynthesis via AAA pathway; L-alpha-aminoadipate from 2-oxoglutarate: step 3/5. Its function is as follows. Catalyzes the reversible hydration of cis-homoaconitate to (2R,3S)-homoisocitrate, a step in the alpha-aminoadipate pathway for lysine biosynthesis. This chain is Homoaconitase, mitochondrial (LYS4), found in Candida glabrata (strain ATCC 2001 / BCRC 20586 / JCM 3761 / NBRC 0622 / NRRL Y-65 / CBS 138) (Yeast).